We begin with the raw amino-acid sequence, 271 residues long: MSSPLAPVGIFDSGVGGLTVARAIIDQLPDEDIVYVGDTGNGPYGPLTIPEVRAHALAIGDDLVGRGVKALVIACNTASAACLRDARERYDVPVVEVILPAVRRAVATTRNGRIGVIGTRATITSHAYQDAFAAARDTEITAVACPRFVDFVERGVTSGRQVLGLAEGYLEPLQRSGVDTLVLGCTHYPLLSGLIQLVMGDNVTLVSSAEETAKEVLRVLTERDILRPHDAPPATRLFEATGDPEAFMALAARFLGPALTGVQPVRPSGMH.

Residues 12–13 and 44–45 contribute to the substrate site; these read DS and YG. Cysteine 75 serves as the catalytic Proton donor/acceptor. 76–77 serves as a coordination point for substrate; that stretch reads NT. The active-site Proton donor/acceptor is cysteine 185. 186 to 187 is a substrate binding site; it reads TH.

This sequence belongs to the aspartate/glutamate racemases family.

The enzyme catalyses L-glutamate = D-glutamate. It participates in cell wall biogenesis; peptidoglycan biosynthesis. Provides the (R)-glutamate required for cell wall biosynthesis. This chain is Glutamate racemase, found in Mycobacterium marinum (strain ATCC BAA-535 / M).